A 282-amino-acid polypeptide reads, in one-letter code: tRNA (guanine-N(7)-)-methyltransferase (282 aa).

A disordered region spans residues Met-1 to Lys-29. Residues Lys-10 to Glu-22 are compositionally biased toward basic and acidic residues. Residues Gly-104, Asn-153 to Thr-154, and Cys-173 contribute to the S-adenosyl-L-methionine site. Asp-176 is a catalytic residue. S-adenosyl-L-methionine is bound at residue Thr-255–Glu-257.

It belongs to the class I-like SAM-binding methyltransferase superfamily. TrmB family. In terms of assembly, forms a complex with TRM82.

It is found in the nucleus. It catalyses the reaction guanosine(46) in tRNA + S-adenosyl-L-methionine = N(7)-methylguanosine(46) in tRNA + S-adenosyl-L-homocysteine. The protein operates within tRNA modification; N(7)-methylguanine-tRNA biosynthesis. Its function is as follows. Catalyzes the formation of N(7)-methylguanine at position 46 (m7G46) in tRNA. The polypeptide is tRNA (guanine-N(7)-)-methyltransferase (Phaeosphaeria nodorum (strain SN15 / ATCC MYA-4574 / FGSC 10173) (Glume blotch fungus)).